The sequence spans 153 residues: SsrA-binding protein (153 aa).

This sequence belongs to the SmpB family.

The protein resides in the cytoplasm. Its function is as follows. Required for rescue of stalled ribosomes mediated by trans-translation. Binds to transfer-messenger RNA (tmRNA), required for stable association of tmRNA with ribosomes. tmRNA and SmpB together mimic tRNA shape, replacing the anticodon stem-loop with SmpB. tmRNA is encoded by the ssrA gene; the 2 termini fold to resemble tRNA(Ala) and it encodes a 'tag peptide', a short internal open reading frame. During trans-translation Ala-aminoacylated tmRNA acts like a tRNA, entering the A-site of stalled ribosomes, displacing the stalled mRNA. The ribosome then switches to translate the ORF on the tmRNA; the nascent peptide is terminated with the 'tag peptide' encoded by the tmRNA and targeted for degradation. The ribosome is freed to recommence translation, which seems to be the essential function of trans-translation. This chain is SsrA-binding protein, found in Lactobacillus delbrueckii subsp. bulgaricus (strain ATCC 11842 / DSM 20081 / BCRC 10696 / JCM 1002 / NBRC 13953 / NCIMB 11778 / NCTC 12712 / WDCM 00102 / Lb 14).